The primary structure comprises 283 residues: Thymidylate synthase (283 aa).

DUMP is bound at residue Arg-22. Cys-160 serves as the catalytic Nucleophile. DUMP is bound by residues 180-183, Asn-191, and 221-223; these read RSCD and HIY. Asp-183 contributes to the (6R)-5,10-methylene-5,6,7,8-tetrahydrofolate binding site. A (6R)-5,10-methylene-5,6,7,8-tetrahydrofolate-binding site is contributed by Ser-282.

The protein belongs to the thymidylate synthase family. Bacterial-type ThyA subfamily. As to quaternary structure, homodimer.

The protein localises to the cytoplasm. The enzyme catalyses dUMP + (6R)-5,10-methylene-5,6,7,8-tetrahydrofolate = 7,8-dihydrofolate + dTMP. It functions in the pathway pyrimidine metabolism; dTTP biosynthesis. Catalyzes the reductive methylation of 2'-deoxyuridine-5'-monophosphate (dUMP) to 2'-deoxythymidine-5'-monophosphate (dTMP) while utilizing 5,10-methylenetetrahydrofolate (mTHF) as the methyl donor and reductant in the reaction, yielding dihydrofolate (DHF) as a by-product. This enzymatic reaction provides an intracellular de novo source of dTMP, an essential precursor for DNA biosynthesis. This Shewanella sediminis (strain HAW-EB3) protein is Thymidylate synthase.